The sequence spans 323 residues: DNA-directed RNA polymerase subunit alpha 1 (323 aa).

The alpha N-terminal domain (alpha-NTD) stretch occupies residues 1-228; the sequence is MSNNNSKLEF…EQISVFVSLR (228 aa). An alpha C-terminal domain (alpha-CTD) region spans residues 244 to 323; that stretch reads IDPILLKPID…DNFRELVEGK (80 aa).

The protein belongs to the RNA polymerase alpha chain family. In terms of assembly, homodimer. The RNAP catalytic core consists of 2 alpha, 1 beta, 1 beta' and 1 omega subunit. When a sigma factor is associated with the core the holoenzyme is formed, which can initiate transcription.

The enzyme catalyses RNA(n) + a ribonucleoside 5'-triphosphate = RNA(n+1) + diphosphate. DNA-dependent RNA polymerase catalyzes the transcription of DNA into RNA using the four ribonucleoside triphosphates as substrates. The sequence is that of DNA-directed RNA polymerase subunit alpha 1 from Francisella tularensis subsp. tularensis (strain FSC 198).